The chain runs to 416 residues: E3 ubiquitin-protein ligase makorin-2 (416 aa).

2 C3H1-type zinc fingers span residues 2 to 29 (STKQ…HDLA) and 31 to 58 (SKPS…HTKP). Positions 61-144 (AAGGAVGPAP…DPQTSPEMKP (84 aa)) are disordered. A compositionally biased stretch (basic and acidic residues) spans 95 to 123 (HSNEPGKREKKTLVLRDRNLTGLAEDKTP). Residue Ser-139 is modified to Phosphoserine. A C3H1-type 3 zinc finger spans residues 165–192 (SNEPQLCPYAAAGECRFGDACVYLHGDM). The tract at residues 193 to 222 (CEICRLQVLHPFDPEQRKAHEKMCMSTFEH) is makorin-type Cys-His. Residues 238–292 (CSICMEVILEKASASERRFGILSNCSHTYCLSCIRQWRCAKQFENPIIKSCPECR) form an RING-type zinc finger. The segment at 321–350 (GMGKKACKYFEQGKGTCPFGSKCLYRHAYP) adopts a C3H1-type 4 zinc-finger fold.

As to quaternary structure, interacts with PDLIM2 (via LIM zinc-binding domain). Interacts with RELA. In terms of tissue distribution, highly expressed in the testis, and lower expression in the brain, thymus, heart, lung, liver, spleen, kidney, ovary, uterus, and seminal vesicle (at protein level). Expressed in primary immune cells, such as CD4-positive and CD8-positive T cells, CD19-positive B cells and CD11c-positive dendritic cells, and in embryonic fibroblasts (at protein level).

The protein localises to the cytoplasm. The protein resides in the nucleus. The enzyme catalyses S-ubiquitinyl-[E2 ubiquitin-conjugating enzyme]-L-cysteine + [acceptor protein]-L-lysine = [E2 ubiquitin-conjugating enzyme]-L-cysteine + N(6)-ubiquitinyl-[acceptor protein]-L-lysine.. Its pathway is protein modification; protein ubiquitination. E3 ubiquitin ligase catalyzing the covalent attachment of ubiquitin moieties onto substrate proteins. Promotes the polyubiquitination and proteasome-dependent degradation of RELA/p65, thereby suppressing RELA-mediated NF-kappa-B transactivation and negatively regulating inflammatory responses. Plays a role in the regulation of spermiation and in male fertility. The protein is E3 ubiquitin-protein ligase makorin-2 (Mkrn2) of Mus musculus (Mouse).